The following is an 88-amino-acid chain: UPF0367 protein Synpcc7942_1638 (88 aa).

It belongs to the UPF0367 family.

This is UPF0367 protein Synpcc7942_1638 from Synechococcus elongatus (strain ATCC 33912 / PCC 7942 / FACHB-805) (Anacystis nidulans R2).